Consider the following 145-residue polypeptide: Small ribosomal subunit protein uS12 (145 aa).

A Hydroxyproline modification is found at P64.

The protein belongs to the universal ribosomal protein uS12 family.

The sequence is that of Small ribosomal subunit protein uS12 (rps23) from Aspergillus fumigatus (strain ATCC MYA-4609 / CBS 101355 / FGSC A1100 / Af293) (Neosartorya fumigata).